The sequence spans 89 residues: Small ribosomal subunit protein uS15 (89 aa).

It belongs to the universal ribosomal protein uS15 family. In terms of assembly, part of the 30S ribosomal subunit. Forms a bridge to the 50S subunit in the 70S ribosome, contacting the 23S rRNA.

Its function is as follows. One of the primary rRNA binding proteins, it binds directly to 16S rRNA where it helps nucleate assembly of the platform of the 30S subunit by binding and bridging several RNA helices of the 16S rRNA. Functionally, forms an intersubunit bridge (bridge B4) with the 23S rRNA of the 50S subunit in the ribosome. The sequence is that of Small ribosomal subunit protein uS15 from Bradyrhizobium sp. (strain ORS 278).